The sequence spans 327 residues: Probable cell division protein WhiA (327 aa).

Positions 275-308 form a DNA-binding region, H-T-H motif; that stretch reads SLEELGRLADPPMTKDAVAGRIRRLLSMADRKAK. The disordered stretch occupies residues 304–327; sequence DRKAKQDGIPDTESAVTPDLLEDA.

This sequence belongs to the WhiA family.

Its function is as follows. Involved in cell division and chromosome segregation. This is Probable cell division protein WhiA from Mycolicibacterium gilvum (strain PYR-GCK) (Mycobacterium gilvum (strain PYR-GCK)).